The sequence spans 276 residues: Undecaprenyl-diphosphatase (276 aa).

7 helical membrane-spanning segments follow: residues 40 to 60, 98 to 118, 121 to 141, 155 to 175, 200 to 220, 227 to 247, and 255 to 275; these read GLAFDTILHIGTLVAIFTFFW, WLIIVGTIPTGIMGILLKDAI, IFRGTLFVGIFLLVTAAVLYY, MSFKQALIVGICQGLAVFPGI, FLLSIPAVIGAGLIQIKDIAT, VLLAGFISSVIFGYLSIKLLM, and LDIFAYYCTIIGIITIILSVV.

The protein belongs to the UppP family.

Its subcellular location is the cell membrane. It catalyses the reaction di-trans,octa-cis-undecaprenyl diphosphate + H2O = di-trans,octa-cis-undecaprenyl phosphate + phosphate + H(+). In terms of biological role, catalyzes the dephosphorylation of undecaprenyl diphosphate (UPP). In Methanosphaera stadtmanae (strain ATCC 43021 / DSM 3091 / JCM 11832 / MCB-3), this protein is Undecaprenyl-diphosphatase.